The following is a 384-amino-acid chain: GTPase Obg (384 aa).

The Obg domain occupies Met-1 to Leu-159. 2 disordered regions span residues Ala-20–Trp-46 and His-129–Thr-149. Gly residues predominate over residues Gly-33–Gly-43. Polar residues predominate over residues Phe-130–Pro-143. Residues Ala-160 to Ala-348 form the OBG-type G domain. GTP-binding positions include Gly-166–Ser-173, Phe-191–His-195, Asp-213–Gly-216, Asn-284–Asp-287, and Ser-329–Leu-331. Mg(2+)-binding residues include Ser-173 and Thr-193.

It belongs to the TRAFAC class OBG-HflX-like GTPase superfamily. OBG GTPase family. As to quaternary structure, monomer. Mg(2+) is required as a cofactor.

The protein resides in the cytoplasm. In terms of biological role, an essential GTPase which binds GTP, GDP and possibly (p)ppGpp with moderate affinity, with high nucleotide exchange rates and a fairly low GTP hydrolysis rate; the half-life of the GTP-bound state is about 50 minutes. Plays a role in control of the cell cycle, stress response, ribosome biogenesis and in those bacteria that undergo differentiation, in morphogenesis control. This chain is GTPase Obg, found in Neisseria gonorrhoeae (strain ATCC 700825 / FA 1090).